Reading from the N-terminus, the 161-residue chain is Beta-lactoglobulin-2 (161 aa).

Cystine bridges form between Cys-66/Cys-159 and Cys-106/Cys-119.

Belongs to the calycin superfamily. Lipocalin family. In terms of assembly, monomer. In terms of tissue distribution, synthesized in mammary gland and secreted in milk.

Its subcellular location is the secreted. Functionally, primary component of whey, it binds retinol and is probably involved in the transport of that molecule. This chain is Beta-lactoglobulin-2 (LGB2), found in Canis lupus familiaris (Dog).